A 362-amino-acid polypeptide reads, in one-letter code: 3-dehydroquinate synthase (362 aa).

Residues 71-76, 105-109, 129-130, Lys142, and Lys151 each bind NAD(+); these read DGEQYK, GVIGD, and TT. Zn(2+) contacts are provided by Glu184, His247, and His264.

It belongs to the sugar phosphate cyclases superfamily. Dehydroquinate synthase family. NAD(+) serves as cofactor. The cofactor is Co(2+). Zn(2+) is required as a cofactor.

The protein resides in the cytoplasm. It catalyses the reaction 7-phospho-2-dehydro-3-deoxy-D-arabino-heptonate = 3-dehydroquinate + phosphate. The protein operates within metabolic intermediate biosynthesis; chorismate biosynthesis; chorismate from D-erythrose 4-phosphate and phosphoenolpyruvate: step 2/7. Functionally, catalyzes the conversion of 3-deoxy-D-arabino-heptulosonate 7-phosphate (DAHP) to dehydroquinate (DHQ). In Haemophilus ducreyi (strain 35000HP / ATCC 700724), this protein is 3-dehydroquinate synthase.